Here is a 217-residue protein sequence, read N- to C-terminus: tRNA (guanine-N(7)-)-methyltransferase (217 aa).

4 residues coordinate S-adenosyl-L-methionine: E43, D68, N101, and N123. A substrate-binding site is contributed by K127. The tract at residues 129–134 (RHNKRR) is interaction with RNA. Substrate is bound by residues D159 and 196–199 (TEYE).

It belongs to the class I-like SAM-binding methyltransferase superfamily. TrmB family.

The enzyme catalyses guanosine(46) in tRNA + S-adenosyl-L-methionine = N(7)-methylguanosine(46) in tRNA + S-adenosyl-L-homocysteine. Its pathway is tRNA modification; N(7)-methylguanine-tRNA biosynthesis. Catalyzes the formation of N(7)-methylguanine at position 46 (m7G46) in tRNA. This Clostridium botulinum (strain Loch Maree / Type A3) protein is tRNA (guanine-N(7)-)-methyltransferase.